Consider the following 48-residue polypeptide: Piguamerin (48 aa).

Disulfide bonds link cysteine 3/cysteine 14, cysteine 8/cysteine 19, cysteine 21/cysteine 41, cysteine 26/cysteine 45, and cysteine 30/cysteine 47. An Antistasin-like domain is found at 19 to 47; it reads CVCVIGQCRKYCPNGFKKDENGCTFPCTC.

It belongs to the protease inhibitor I15 (antistasin) family.

Its subcellular location is the secreted. Inhibits plasma and tissue kallikrein, and trypsin. May be involved in leech hematophagia. The protein is Piguamerin of Hirudo nipponia (Korean blood-sucking leech).